The chain runs to 253 residues: 5'/3'-nucleotidase SurE (253 aa).

Residues Asp-8, Asp-9, Ser-39, and Asn-92 each contribute to the a divalent metal cation site.

The protein belongs to the SurE nucleotidase family. Requires a divalent metal cation as cofactor.

The protein resides in the cytoplasm. The catalysed reaction is a ribonucleoside 5'-phosphate + H2O = a ribonucleoside + phosphate. The enzyme catalyses a ribonucleoside 3'-phosphate + H2O = a ribonucleoside + phosphate. It catalyses the reaction [phosphate](n) + H2O = [phosphate](n-1) + phosphate + H(+). In terms of biological role, nucleotidase with a broad substrate specificity as it can dephosphorylate various ribo- and deoxyribonucleoside 5'-monophosphates and ribonucleoside 3'-monophosphates with highest affinity to 3'-AMP. Also hydrolyzes polyphosphate (exopolyphosphatase activity) with the preference for short-chain-length substrates (P20-25). Might be involved in the regulation of dNTP and NTP pools, and in the turnover of 3'-mononucleotides produced by numerous intracellular RNases (T1, T2, and F) during the degradation of various RNAs. The sequence is that of 5'/3'-nucleotidase SurE from Erwinia tasmaniensis (strain DSM 17950 / CFBP 7177 / CIP 109463 / NCPPB 4357 / Et1/99).